Reading from the N-terminus, the 122-residue chain is Small ribosomal subunit protein uS13 (122 aa).

Residues 97–122 form a disordered region; that stretch reads PVRGQRTHTNARTRKGPAKAIAGKKK.

The protein belongs to the universal ribosomal protein uS13 family. As to quaternary structure, part of the 30S ribosomal subunit. Forms a loose heterodimer with protein S19. Forms two bridges to the 50S subunit in the 70S ribosome.

Functionally, located at the top of the head of the 30S subunit, it contacts several helices of the 16S rRNA. In the 70S ribosome it contacts the 23S rRNA (bridge B1a) and protein L5 of the 50S subunit (bridge B1b), connecting the 2 subunits; these bridges are implicated in subunit movement. Contacts the tRNAs in the A and P-sites. The protein is Small ribosomal subunit protein uS13 of Rhizobium rhizogenes (strain K84 / ATCC BAA-868) (Agrobacterium radiobacter).